Reading from the N-terminus, the 264-residue chain is Type II iodothyronine deiodinase (264 aa).

The Lumenal portion of the chain corresponds to 1-7 (MGLLSVD). A helical; Signal-anchor for type III membrane protein membrane pass occupies residues 8 to 28 (LLITLQILPGFFSNCLFLALY). Residues 29–264 (DSVVLVKHVL…AESGQTGTEK (236 aa)) lie on the Cytoplasmic side of the membrane. The active site involves selenocysteine 124. Position 124 (selenocysteine 124) is a non-standard amino acid, selenocysteine.

Belongs to the iodothyronine deiodinase family. As to quaternary structure, predominantly monomer. Can form homodimers but homodimerization is not essential for enzyme activity. In terms of tissue distribution, high levels seen in the metamorphosing tail.

It is found in the endoplasmic reticulum membrane. It catalyses the reaction 3,3',5-triiodo-L-thyronine + iodide + A + H(+) = L-thyroxine + AH2. It carries out the reaction 3,3'-diiodo-L-thyronine + iodide + A + H(+) = 3,3',5'-triiodo-L-thyronine + AH2. The catalysed reaction is 3'-iodo-L-thyronine + iodide + A + H(+) = 3',5'-diiodo-L-thyronine + AH2. The enzyme catalyses 3,3'-diiodothyronamine + iodide + A + H(+) = 3,3',5'-triiodothyronamine + AH2. It catalyses the reaction 3'-iodothyronamine + iodide + A + H(+) = 3',5'-diiodothyronamine + AH2. Not inhibited by N(6)-propylthiouracil. In terms of biological role, plays a crucial role in the metabolism of thyroid hormones (TH) and has specific roles in TH activation and inactivation by deiodination. Catalyzes the deiodination of L-thyroxine (T4) to 3,5,3'-triiodothyronine (T3) and 3',5'-diiodothyronine (3',5'-T2) to 3'-monoiodothyronine (3'-T1) via outer-ring deiodination (ORD). Catalyzes the deiodination of 3,3',5'-triiodothyronine (rT3) to 3,3'-diiodothyronine (3,3'-T2) via ORD. Catalyzes the phenolic ring deiodinations of 3,3',5'-triiodothyronamine and 3',5'- diiodothyronamine. The polypeptide is Type II iodothyronine deiodinase (dio2) (Aquarana catesbeiana (American bullfrog)).